The primary structure comprises 409 residues: MQIYKVGGAVRDRLLGKPVTDIDWVVVGATTEEMLAKGFRPVGADFPVFLHPKSGEEYALARTERKSGRGYGGFTFHASPEVTLEEDLIRRDLTINAMAEDDQQNLTDPYHGQRDLEERILRHVSPAFAEDPLRVLRVARFAARYAELGFKVAPETLELMRQLSESGELEALTAERSWKEISRALMEDQPQVFIQVLRDCGALKVLMPEVDALFGVPQPEAHHPEIDSGLHTLSVLEQSALHKQPLTVRWACLLHDLGKGLTPEEEWPRHIAHEHKGLKLIKAVNERFKAPKDCQELALLVGQYHTHGHRALELKASTLLELLQSFDVYRRPQRFEEFIVACEMDARGRKGLEQRSYPQADYLRGAANVARGVAVQPLLEKGFKGPELGEALKRERLKALKVYKESAAS.

Gly-8 and Arg-11 together coordinate ATP. CTP-binding residues include Gly-8 and Arg-11. Residues Asp-21 and Asp-23 each coordinate Mg(2+). ATP is bound by residues Arg-91, Arg-137, and Arg-140. CTP-binding residues include Arg-91, Arg-137, and Arg-140. An HD domain is found at 228 to 329 (SGLHTLSVLE…LELLQSFDVY (102 aa)).

Belongs to the tRNA nucleotidyltransferase/poly(A) polymerase family. Bacterial CCA-adding enzyme type 1 subfamily. Monomer. Can also form homodimers and oligomers. Requires Mg(2+) as cofactor. Ni(2+) serves as cofactor.

The enzyme catalyses a tRNA precursor + 2 CTP + ATP = a tRNA with a 3' CCA end + 3 diphosphate. The catalysed reaction is a tRNA with a 3' CCA end + 2 CTP + ATP = a tRNA with a 3' CCACCA end + 3 diphosphate. Its function is as follows. Catalyzes the addition and repair of the essential 3'-terminal CCA sequence in tRNAs without using a nucleic acid template. Adds these three nucleotides in the order of C, C, and A to the tRNA nucleotide-73, using CTP and ATP as substrates and producing inorganic pyrophosphate. tRNA 3'-terminal CCA addition is required both for tRNA processing and repair. Also involved in tRNA surveillance by mediating tandem CCA addition to generate a CCACCA at the 3' terminus of unstable tRNAs. While stable tRNAs receive only 3'-terminal CCA, unstable tRNAs are marked with CCACCA and rapidly degraded. The chain is Multifunctional CCA protein from Pseudomonas fluorescens (strain Pf0-1).